The primary structure comprises 1054 residues: Bifunctional cytochrome P450/NADPH--P450 reductase 2 (1054 aa).

Residues 1–475 (MKQASAIPQP…QADIKAETKP (475 aa)) are cytochrome P450. Cys403 serves as a coordination point for heme. The segment covering 462–480 (QRKEQADIKAETKPKETKP) has biased composition (basic and acidic residues). Positions 462–482 (QRKEQADIKAETKPKETKPKH) are disordered. The segment at 476–1053 (KETKPKHGTP…RRYVKDVWTG (578 aa)) is NADPH--P450 reductase. Residues 486-625 (LLVLFGSNLG…HRESWENRFW (140 aa)) form the Flavodoxin-like domain. FMN-binding positions include 492–497 (SNLGTA), 539–542 (SYNG), 573–575 (CGN), and 581–583 (TYQ). One can recognise an FAD-binding FR-type domain in the interval 663 to 896 (YGAFEGIVLE…RTPQSGFQMP (234 aa)).

The protein in the N-terminal section; belongs to the cytochrome P450 family. FAD is required as a cofactor. It depends on FMN as a cofactor. Requires heme b as cofactor.

It is found in the cytoplasm. The enzyme catalyses an organic molecule + reduced [NADPH--hemoprotein reductase] + O2 = an alcohol + oxidized [NADPH--hemoprotein reductase] + H2O + H(+). It catalyses the reaction 2 oxidized [cytochrome P450] + NADPH = 2 reduced [cytochrome P450] + NADP(+) + H(+). Functionally, functions as a fatty acid monooxygenase. Catalyzes hydroxylation of a range of medium to long-chain fatty acids, with a preference for long-chain unsaturated and branched-chain fatty acids over saturated fatty acids. Hydroxylation of myristic acid occurs mainly at the omega-2 and omega-3 positions, in approximately equal proportions. Also displays a NADPH-dependent reductase activity in the C-terminal domain, which allows electron transfer from NADPH to the heme iron of the cytochrome P450 N-terminal domain. This chain is Bifunctional cytochrome P450/NADPH--P450 reductase 2, found in Bacillus subtilis (strain 168).